Here is a 631-residue protein sequence, read N- to C-terminus: RING finger protein 112 (631 aa).

Residues 57-98 (CSICLERLRDPISLDCGHDFCIRCFSTHRLPGCEPPCCPECR) form an RING-type zinc finger. The interaction with ZBTB16 stretch occupies residues 131 to 631 (PVRAEPLLLV…GDREPLLQEE (501 aa)). The GB1/RHD3-type G domain maps to 166 to 397 (DTPVCLLAVL…YVSDVLSAAP (232 aa)). Residue 318 to 319 (RD) participates in GTP binding. The next 2 helical transmembrane spans lie at 547–567 (LAAV…GVVG) and 580–600 (GMVA…GGGV).

Belongs to the TRAFAC class dynamin-like GTPase superfamily. GB1/RHD3 GTPase family. GB1 subfamily. As to quaternary structure, self-associates. Interacts with SP1 in an oxidative stress-regulated manner. Interacts with SIGMAR1 in an oxidative stress-regulated manner. Interacts with ZBTB16 (via C2H2-type zinc finger domains 1 and 2). Post-translationally, auto-ubiquitinated. As to expression, predominantly expressed in brain. Decreased expression in glioma brain tumors as compared to normal brains (at protein level).

The protein localises to the membrane. It localises to the cytoplasm. It is found in the nucleus. The protein resides in the nuclear body. Its subcellular location is the nucleoplasm. The protein localises to the endosome. It localises to the cytoplasmic vesicle. It is found in the secretory vesicle. The protein resides in the synaptic vesicle. Its subcellular location is the postsynaptic density. The protein localises to the perikaryon. It localises to the cell projection. It is found in the neuron projection. It catalyses the reaction S-ubiquitinyl-[E2 ubiquitin-conjugating enzyme]-L-cysteine + [acceptor protein]-L-lysine = [E2 ubiquitin-conjugating enzyme]-L-cysteine + N(6)-ubiquitinyl-[acceptor protein]-L-lysine.. Its pathway is protein modification; protein ubiquitination. In terms of biological role, E3 ubiquitin-protein ligase that plays an important role in neuronal differentiation, including neurogenesis and gliogenesis, during brain development. During embryonic development initiates neuronal differentiation by inducing cell cycle arrest at the G0/G1 phase through up-regulation of cell-cycle regulatory proteins. Plays a role not only in the fetal period during the development of the nervous system, but also in the adult brain, where it is involved in the maintenance of neural functions and protection of the nervous tissue cells from oxidative stress-induced damage. Exhibits GTPase and E3 ubiquitin-protein ligase activities. Regulates dendritic spine density and synaptic neurotransmission; its ability to hydrolyze GTP is involved in the maintenance of dendritic spine density. The chain is RING finger protein 112 (RNF112) from Homo sapiens (Human).